Here is a 122-residue protein sequence, read N- to C-terminus: Flagellar protein FliT (122 aa).

The segment at 1 to 50 is required for homodimerization; that stretch reads MTSTVEFINRWQRIALLSQSLLELAQRGEWDLLLQQEVSYLQRIETVMEK. The segment at 60–98 is fliD binding; the sequence is IQDMVAGYIKQTLDNEQLLKGLLQQRLDELSSLIGQSTR.

It belongs to the FliT family. Homodimer. Interacts with FliD and FlhC.

The protein localises to the cytoplasm. It is found in the cytosol. Functionally, dual-function protein that regulates the transcription of class 2 flagellar operons and that also acts as an export chaperone for the filament-capping protein FliD. As a transcriptional regulator, acts as an anti-FlhDC factor; it directly binds FlhC, thus inhibiting the binding of the FlhC/FlhD complex to class 2 promoters, resulting in decreased expression of class 2 flagellar operons. As a chaperone, effects FliD transition to the membrane by preventing its premature polymerization, and by directing it to the export apparatus. The protein is Flagellar protein FliT of Salmonella paratyphi A (strain AKU_12601).